The sequence spans 319 residues: Ribosomal RNA small subunit methyltransferase H (319 aa).

S-adenosyl-L-methionine-binding positions include 52–54 (GGH), D70, F100, D126, and Q133. Residues 289 to 319 (PKPLSPSELERQRNPRARSAKLRVAARSSQM) are disordered.

It belongs to the methyltransferase superfamily. RsmH family.

The protein resides in the cytoplasm. The catalysed reaction is cytidine(1402) in 16S rRNA + S-adenosyl-L-methionine = N(4)-methylcytidine(1402) in 16S rRNA + S-adenosyl-L-homocysteine + H(+). In terms of biological role, specifically methylates the N4 position of cytidine in position 1402 (C1402) of 16S rRNA. In Synechococcus sp. (strain JA-2-3B'a(2-13)) (Cyanobacteria bacterium Yellowstone B-Prime), this protein is Ribosomal RNA small subunit methyltransferase H.